Consider the following 150-residue polypeptide: UPF0178 protein ECA0873 (150 aa).

The protein belongs to the UPF0178 family.

The protein is UPF0178 protein ECA0873 of Pectobacterium atrosepticum (strain SCRI 1043 / ATCC BAA-672) (Erwinia carotovora subsp. atroseptica).